The sequence spans 228 residues: MAPYHIRKYQDSDHRSVVNLFCRGTEEHISASFRYMLLLPGTLLILLGVPLTLFLASGSWLLVLLSTLTLLVSLWLLAKYPWEKYTAMCLHSDMADIPRTYLSSHYSCFWVAESRGQMVGIIAVLPVKDPLLQRKQLQLRHLSVSLEHRREGIGRAMVRTALQFAEMQGFSEVVLVTSMLQYAALALYQSMGFQKTGEFFYTFVSRLRNSPMICLKYCLTSALNDLKT.

The next 2 helical transmembrane spans lie at 36 to 56 (MLLLPGTLLILLGVPLTLFLA) and 58 to 78 (GSWLLVLLSTLTLLVSLWLLA). The N-acetyltransferase domain maps to 61–217 (LLVLLSTLTL…RNSPMICLKY (157 aa)).

It belongs to the camello family.

Its subcellular location is the nucleus membrane. The protein resides in the cytoplasm. It is found in the perinuclear region. It carries out the reaction L-lysyl-[protein] + acetyl-CoA = N(6)-acetyl-L-lysyl-[protein] + CoA + H(+). Its function is as follows. Has histone acetyltransferase activity in vitro, with specificity for histone H4. In Rattus norvegicus (Rat), this protein is N-acetyltransferase family 8 member 3.